Consider the following 446-residue polypeptide: Phosphoglucosamine mutase (446 aa).

Ser-102 (phosphoserine intermediate) is an active-site residue. Residues Ser-102, Asp-241, Asp-243, and Asp-245 each contribute to the Mg(2+) site. A Phosphoserine modification is found at Ser-102.

This sequence belongs to the phosphohexose mutase family. Mg(2+) serves as cofactor. Post-translationally, activated by phosphorylation.

The catalysed reaction is alpha-D-glucosamine 1-phosphate = D-glucosamine 6-phosphate. Functionally, catalyzes the conversion of glucosamine-6-phosphate to glucosamine-1-phosphate. The polypeptide is Phosphoglucosamine mutase (Xylella fastidiosa (strain M23)).